The following is a 276-amino-acid chain: Formamidopyrimidine-DNA glycosylase (276 aa).

Pro-2 serves as the catalytic Schiff-base intermediate with DNA. Catalysis depends on Glu-3, which acts as the Proton donor. The active-site Proton donor; for beta-elimination activity is the Lys-60. DNA contacts are provided by His-93 and Arg-112. The FPG-type zinc finger occupies 240–274 (NVYGKKGEPCVTCGTILEKTVVGGRGTHYCPICQP). Arg-264 serves as the catalytic Proton donor; for delta-elimination activity.

It belongs to the FPG family. In terms of assembly, monomer. Requires Zn(2+) as cofactor.

It carries out the reaction Hydrolysis of DNA containing ring-opened 7-methylguanine residues, releasing 2,6-diamino-4-hydroxy-5-(N-methyl)formamidopyrimidine.. It catalyses the reaction 2'-deoxyribonucleotide-(2'-deoxyribose 5'-phosphate)-2'-deoxyribonucleotide-DNA = a 3'-end 2'-deoxyribonucleotide-(2,3-dehydro-2,3-deoxyribose 5'-phosphate)-DNA + a 5'-end 5'-phospho-2'-deoxyribonucleoside-DNA + H(+). Involved in base excision repair of DNA damaged by oxidation or by mutagenic agents. Acts as a DNA glycosylase that recognizes and removes damaged bases. Has a preference for oxidized purines, such as 7,8-dihydro-8-oxoguanine (8-oxoG). Has AP (apurinic/apyrimidinic) lyase activity and introduces nicks in the DNA strand. Cleaves the DNA backbone by beta-delta elimination to generate a single-strand break at the site of the removed base with both 3'- and 5'-phosphates. This is Formamidopyrimidine-DNA glycosylase from Bacillus anthracis.